The following is a 349-amino-acid chain: tRNA N6-adenosine threonylcarbamoyltransferase (349 aa).

Fe cation is bound by residues H117, H121, and Y138. Residues 138-142 (YVAGG), D170, D191, and N271 contribute to the substrate site. D299 contributes to the Fe cation binding site.

It belongs to the KAE1 / TsaD family. Fe(2+) serves as cofactor.

It localises to the cytoplasm. The catalysed reaction is L-threonylcarbamoyladenylate + adenosine(37) in tRNA = N(6)-L-threonylcarbamoyladenosine(37) in tRNA + AMP + H(+). Functionally, required for the formation of a threonylcarbamoyl group on adenosine at position 37 (t(6)A37) in tRNAs that read codons beginning with adenine. Is probably involved in the transfer of the threonylcarbamoyl moiety of threonylcarbamoyl-AMP (TC-AMP) to the N6 group of A37. In Aeropyrum pernix (strain ATCC 700893 / DSM 11879 / JCM 9820 / NBRC 100138 / K1), this protein is tRNA N6-adenosine threonylcarbamoyltransferase.